The primary structure comprises 422 residues: Ribonuclease Y (422 aa).

The KH domain maps to 112–172; the sequence is TTNIVKLPSD…IRREIATRTL (61 aa). Positions 238 to 331 constitute an HD domain; the sequence is VLAHSIEVAK…VAIADSISAS (94 aa).

This sequence belongs to the RNase Y family.

Its function is as follows. Endoribonuclease that initiates mRNA decay. In Mycoplasma mycoides, this protein is Ribonuclease Y.